Reading from the N-terminus, the 702-residue chain is Arginine decarboxylase 1 (702 aa).

Position 151 is an N6-(pyridoxal phosphate)lysine (Lys151). 336–346 (IDVGGGLGIDY) provides a ligand contact to substrate. Residues 668–686 (ASGESSGMSSDSEGSAAGA) show a composition bias toward low complexity. The tract at residues 668–702 (ASGESSGMSSDSEGSAAGAAEEDDDEWEFMRGLTV) is disordered.

It belongs to the Orn/Lys/Arg decarboxylase class-II family. SpeA subfamily. Pyridoxal 5'-phosphate serves as cofactor. Mg(2+) is required as a cofactor. As to expression, expressed in roots, leaves and stems (at protein level).

The enzyme catalyses L-arginine + H(+) = agmatine + CO2. The protein operates within amine and polyamine biosynthesis; agmatine biosynthesis; agmatine from L-arginine: step 1/1. This chain is Arginine decarboxylase 1 (ADC1), found in Oryza sativa subsp. japonica (Rice).